A 185-amino-acid polypeptide reads, in one-letter code: dTDP-4-dehydrorhamnose 3,5-epimerase (185 aa).

Substrate contacts are provided by residues Arg-23, Glu-28, 47 to 49 (QDN), and Arg-59. The active-site Proton acceptor is the His-62. 2 residues coordinate substrate: Lys-72 and His-119. Catalysis depends on Tyr-132, which acts as the Proton donor. Residues Asp-143 and Lys-168 each contribute to the substrate site.

It belongs to the dTDP-4-dehydrorhamnose 3,5-epimerase family. Homodimer.

The enzyme catalyses dTDP-4-dehydro-6-deoxy-alpha-D-glucose = dTDP-4-dehydro-beta-L-rhamnose. It participates in carbohydrate biosynthesis; dTDP-L-rhamnose biosynthesis. It functions in the pathway bacterial outer membrane biogenesis; LPS O-antigen biosynthesis. Its function is as follows. Catalyzes the epimerization of the C3' and C5'positions of dTDP-6-deoxy-D-xylo-4-hexulose, forming dTDP-6-deoxy-L-lyxo-4-hexulose. In Escherichia coli (strain K12), this protein is dTDP-4-dehydrorhamnose 3,5-epimerase (rfbC).